The following is a 639-amino-acid chain: Protein artemis (639 aa).

3 disordered regions span residues 450–496, 515–570, and 590–617; these read MDCT…LTSS, SELE…SQVD, and EAAELKSDSQVSSDFELPPTPGSKVPQP. Positions 454 to 466 are enriched in acidic residues; the sequence is ESNDDDDDEDDAA. Polar residues predominate over residues 518–537; the sequence is ENSQNTQTLSTENTASQSPE. The span at 548–560 shows a compositional bias: low complexity; the sequence is VHMSSSQSTHISD.

Belongs to the DNA repair metallo-beta-lactamase (DRMBL) family.

It is found in the nucleus. May have a role in the processing of DNA double strand breaks (DSBs) prior to their repair by the non homologous end joining (NHEJ) pathway. Probably exhibits both exonuclease and endonuclease activity. The chain is Protein artemis (dclre1c) from Danio rerio (Zebrafish).